Reading from the N-terminus, the 703-residue chain is UvrABC system protein B (703 aa).

One can recognise a Helicase ATP-binding domain in the interval E33–R419. G46 to T53 provides a ligand contact to ATP. The short motif at Y99 to I122 is the Beta-hairpin element. Positions Q436–I589 constitute a Helicase C-terminal domain. The region spanning A659–E694 is the UVR domain.

Belongs to the UvrB family. Forms a heterotetramer with UvrA during the search for lesions. Interacts with UvrC in an incision complex.

Its subcellular location is the cytoplasm. In terms of biological role, the UvrABC repair system catalyzes the recognition and processing of DNA lesions. A damage recognition complex composed of 2 UvrA and 2 UvrB subunits scans DNA for abnormalities. Upon binding of the UvrA(2)B(2) complex to a putative damaged site, the DNA wraps around one UvrB monomer. DNA wrap is dependent on ATP binding by UvrB and probably causes local melting of the DNA helix, facilitating insertion of UvrB beta-hairpin between the DNA strands. Then UvrB probes one DNA strand for the presence of a lesion. If a lesion is found the UvrA subunits dissociate and the UvrB-DNA preincision complex is formed. This complex is subsequently bound by UvrC and the second UvrB is released. If no lesion is found, the DNA wraps around the other UvrB subunit that will check the other stand for damage. This chain is UvrABC system protein B, found in Bifidobacterium longum (strain NCC 2705).